Consider the following 348-residue polypeptide: MAEQQKGLTYADAGVDIDAGNALVERIKPAARRTARPGTVSGLGGFGALFDLKAAGYRDPVLVAATDGVGTKLRIAIDTGEVDTIGIDLVAMCVNDLVCQGAEPLFFLDYFATGKLELDQAARIIEGIAEGCAASGCALIGGETAEMPGMYHKGDFDLAGFAVGAMERGADLPRGVAAGDVLLGLASNGVHSNGYSFVRKVVELSGLAWDAPSPFGGDSLGRALLAPTRLYVTQALAAVRAGGVHALAHITGGGLTENLPRVLPEGLGARIDLGAWDLPPVFRWLAETAAMAEPELLKTFNCGIGMIVVVAADRADAIAALLEAEGETVTRIGEVIPGQGVSYDGRLL.

It belongs to the AIR synthase family.

The protein resides in the cytoplasm. The catalysed reaction is 2-formamido-N(1)-(5-O-phospho-beta-D-ribosyl)acetamidine + ATP = 5-amino-1-(5-phospho-beta-D-ribosyl)imidazole + ADP + phosphate + H(+). The protein operates within purine metabolism; IMP biosynthesis via de novo pathway; 5-amino-1-(5-phospho-D-ribosyl)imidazole from N(2)-formyl-N(1)-(5-phospho-D-ribosyl)glycinamide: step 2/2. This chain is Phosphoribosylformylglycinamidine cyclo-ligase, found in Cereibacter sphaeroides (strain ATCC 17025 / ATH 2.4.3) (Rhodobacter sphaeroides).